Reading from the N-terminus, the 578-residue chain is Asparagine synthetase [glutamine-hydrolyzing] 2 (578 aa).

C2 (for GATase activity) is an active-site residue. One can recognise a Glutamine amidotransferase type-2 domain in the interval 2-185 (CGILAVLGCI…PGHIYSSKQG (184 aa)). Residues 50–54 (RLAII), 75–77 (NGE), and D98 each bind L-glutamine. The 241-residue stretch at 210 to 450 (LRNAFEKAVI…LPKHILYRQK (241 aa)) folds into the Asparagine synthetase domain. ATP-binding positions include L231, I267, and 341–342 (SG).

As to expression, expressed in the vascular region adjacent to leaf mesophyll cells in the companion cell-sieve tube element complex.

The enzyme catalyses L-aspartate + L-glutamine + ATP + H2O = L-asparagine + L-glutamate + AMP + diphosphate + H(+). The protein operates within amino-acid biosynthesis; L-asparagine biosynthesis. Essential for nitrogen assimilation, distribution and remobilization within the plant via the phloem. This is Asparagine synthetase [glutamine-hydrolyzing] 2 (ASN2) from Arabidopsis thaliana (Mouse-ear cress).